Consider the following 119-residue polypeptide: Large ribosomal subunit protein bL20c (119 aa).

The protein belongs to the bacterial ribosomal protein bL20 family.

The protein resides in the plastid. Its subcellular location is the chloroplast. Its function is as follows. Binds directly to 23S ribosomal RNA and is necessary for the in vitro assembly process of the 50S ribosomal subunit. It is not involved in the protein synthesizing functions of that subunit. In Saccharum hybrid (Sugarcane), this protein is Large ribosomal subunit protein bL20c.